The chain runs to 638 residues: Ubiquilin-2 (638 aa).

Low complexity predominate over residues Met-1 to Pro-26. Disordered regions lie at residues Met-1–Lys-31 and Arg-107–Gly-158. The residue at position 2 (Ala-2) is an N-acetylalanine. Ser-25 carries the phosphoserine modification. In terms of domain architecture, Ubiquitin-like spans Ile-33–Arg-107. The span at Ala-112–Gly-158 shows a compositional bias: low complexity. STI1 domains are found at residues Ser-189–Met-217 and Asn-219–Met-258. A disordered region spans residues Phe-298–Ala-364. The segment covering Thr-305 to Thr-316 has biased composition (low complexity). Pro residues predominate over residues Leu-327–Thr-336. Over residues Thr-337–Ala-364 the composition is skewed to low complexity. STI1 domains follow at residues Asn-393 to Met-440 and Leu-444 to Leu-476. Repeat copies occupy residues Pro-505–Gly-507, Pro-508–Thr-510, Pro-511–Gly-513, Pro-514–Gly-516, Pro-517–Val-519, Pro-520–Thr-522, Pro-523–Gly-525, Pro-526–Gly-528, Pro-529–Gly-531, Pro-532–Thr-533, and Pro-535–Ser-537. The tract at residues Pro-505–Ser-537 is 11 X 3 AA tandem repeats P-X-X. A disordered region spans residues Gly-528–Asn-570. The span at Thr-533–Thr-551 shows a compositional bias: low complexity. Polar residues predominate over residues Val-552 to Asn-570. In terms of domain architecture, UBA spans Pro-589–Ser-635.

Homodimer. Forms heterodimer with UBQLN1. Binds UBE3A and BTRC. Interacts with the 19S proteasome subunit. Interacts with C9orf72. Binds CD47. Interacts with HNRNPA1 and HNRNPU. Found in a complex with UBQLN1 and MAP1LC3A/B/C. Interacts with EPS15, EPN1 and EPN2. Interacts with HERPUD1. Interacts with RAD23A. Interacts with TARDBP. Interacts (via C-terminus) with FAF2 (via N-terminus). Interacts with UBQLN4. Degraded during macroautophagy. Highly expressed in smooth muscle. Expression in other tissues is very low.

The protein localises to the cytoplasm. It is found in the nucleus. The protein resides in the membrane. Its subcellular location is the cytoplasmic vesicle. It localises to the autophagosome. Its function is as follows. Plays an important role in the regulation of different protein degradation mechanisms and pathways including ubiquitin-proteasome system (UPS), autophagy and the endoplasmic reticulum-associated protein degradation (ERAD) pathway. Mediates the proteasomal targeting of misfolded or accumulated proteins for degradation by binding (via UBA domain) to their polyubiquitin chains and by interacting (via ubiquitin-like domain) with the subunits of the proteasome. Plays a role in the ERAD pathway via its interaction with ER-localized proteins FAF2/UBXD8 and HERPUD1 and may form a link between the polyubiquitinated ERAD substrates and the proteasome. Involved in the regulation of macroautophagy and autophagosome formation; required for maturation of autophagy-related protein LC3 from the cytosolic form LC3-I to the membrane-bound form LC3-II and may assist in the maturation of autophagosomes to autolysosomes by mediating autophagosome-lysosome fusion. Negatively regulates the endocytosis of GPCR receptors: AVPR2 and ADRB2, by specifically reducing the rate at which receptor-arrestin complexes concentrate in clathrin-coated pits (CCPs). Links CD47 to vimentin-containing intermediate filaments of the cytoskeleton. In Mus musculus (Mouse), this protein is Ubiquilin-2 (Ubqln2).